Reading from the N-terminus, the 557-residue chain is Arginine--tRNA ligase (557 aa).

The 'HIGH' region signature appears at 128–138 (ANPTGPLHVGH).

Belongs to the class-I aminoacyl-tRNA synthetase family. As to quaternary structure, monomer.

The protein resides in the cytoplasm. It carries out the reaction tRNA(Arg) + L-arginine + ATP = L-arginyl-tRNA(Arg) + AMP + diphosphate. The chain is Arginine--tRNA ligase from Thiobacillus denitrificans (strain ATCC 25259 / T1).